Reading from the N-terminus, the 238-residue chain is Aspirochlorine biosynthesis protein N (238 aa).

The protein belongs to the asaB hydroxylase/desaturase family.

It functions in the pathway mycotoxin biosynthesis. In terms of biological role, part of the gene cluster that mediates the biosynthesis of aspirochlorine (or antibiotic A30641), an unusual halogenated spiro compound with distinctive antifungal properties due to selective inhibition of protein biosynthesis, and which is also active against bacteria, viruses, and murine tumor cells. The non-ribosomal peptide synthetase (NRPS) aclP is responsible the formation of the diketopiperazine (DKP) core from the condensation of 2 phenylalanine residues. One Phe residue is tailored into chlorotyrosine by hydroxylation and chlorination, whereas the second Phe undergoes an unprecedented C-C bond cleavage to be converted into glycine. After formation of the DKP, sulfur is incorporated into the DKP by conjugation with glutathione by aclG, followed by its stepwise degradation to the thiol by aclI, aclJ and aclK, and the dithiol oxidation by aclT. In addition, oxygenases (aclB, aclC, aclL and aclO) and O-methyltransferases (aclM and aclU) act as tailoring enzymes to produce the intermediate dechloroaspirochlorine. Ultimately, chlorination of dechloroaspirochlorine by the halogenase aclH is the last step in the aspirochlorine pathway. The chain is Aspirochlorine biosynthesis protein N from Aspergillus oryzae (strain ATCC 42149 / RIB 40) (Yellow koji mold).